A 382-amino-acid chain; its full sequence is Putative glutamate--cysteine ligase 2-1 (382 aa).

Belongs to the glutamate--cysteine ligase type 2 family. YbdK subfamily.

It catalyses the reaction L-cysteine + L-glutamate + ATP = gamma-L-glutamyl-L-cysteine + ADP + phosphate + H(+). Its function is as follows. ATP-dependent carboxylate-amine ligase which exhibits weak glutamate--cysteine ligase activity. This Frankia alni (strain DSM 45986 / CECT 9034 / ACN14a) protein is Putative glutamate--cysteine ligase 2-1.